A 468-amino-acid chain; its full sequence is Monogalactosyldiacylglycerol synthase 2, chloroplastic (468 aa).

Residues H82, R251, 361–365, and E383 each bind UDP; that span reads GTIAE.

The protein belongs to the glycosyltransferase 28 family. Expressed mainly in floral buds. Detected in roots, leaves, stems, siliques and pollen tubes.

It localises to the plastid. It is found in the chloroplast outer membrane. The enzyme catalyses a 1,2-diacyl-sn-glycerol + UDP-alpha-D-galactose = a 1,2-diacyl-3-O-(beta-D-galactosyl)-sn-glycerol + UDP + H(+). It carries out the reaction 1,2-di-(9Z,12Z-octadecadienoyl)-sn-glycerol + UDP-alpha-D-galactose = 1,2-di-(9Z,12Z-octadecadienoyl)-3-beta-D-galactosyl-sn-glycerol + UDP + H(+). It catalyses the reaction 1-(9Z-octadecenoyl)-2-hexadecanoyl-sn-glycerol + UDP-alpha-D-galactose = 1-(9Z-octadecenoyl)-2-hexadecanoyl-3-beta-D-galactosyl-sn-glycerol + UDP + H(+). The catalysed reaction is 1,2-di-(9Z-octadecenoyl)-sn-glycerol + UDP-alpha-D-galactose = 1,2-di-(9Z-octadecenoyl)-3-beta-D-galactosyl-sn-glycerol + UDP + H(+). With respect to regulation, inhibited by galvestine-1. Involved in the synthesis of monogalactosyldiacylglycerol, the major structural component of photosynthetic membranes and in the chloroplast envelope biogenesis. Can use both prokaryotic (18:1/16:0) or eukaryotic (18:2/18:2) 1,2-diacylglycerol species, but operates with some preference for the eukaryotic one. Plays a minor role in galactolipid synthesis in chloroplasts. Is required for membrane lipid remodeling in phosphate-starved roots. Acts as the minor factor involved in digalactosyldiacylglycerol (DGDG) biosynthesis in phosphate-starved roots. Does not seem to be required for plant growth under nutrient-sufficient conditions. Required for membrane lipid remodeling in plants grown in acidic conditions. This is Monogalactosyldiacylglycerol synthase 2, chloroplastic from Arabidopsis thaliana (Mouse-ear cress).